We begin with the raw amino-acid sequence, 79 residues long: Large ribosomal subunit protein bL31 (79 aa).

The protein belongs to the bacterial ribosomal protein bL31 family. Type A subfamily. Part of the 50S ribosomal subunit.

Binds the 23S rRNA. The protein is Large ribosomal subunit protein bL31 of Synechococcus sp. (strain CC9902).